The chain runs to 183 residues: uncharacterized protein (183 aa).

The span at 105–149 (YNTNNSNTNTNYNNNNNNNNNNNNNNNNNNNKNNNNNNNNNNSNS) shows a compositional bias: low complexity. The segment at 105–151 (YNTNNSNTNTNYNNNNNNNNNNNNNNNNNNNKNNNNNNNNNNSNSKI) is disordered.

This is an uncharacterized protein from Dictyostelium discoideum (Social amoeba).